A 467-amino-acid chain; its full sequence is Asparagine--tRNA ligase (467 aa).

This sequence belongs to the class-II aminoacyl-tRNA synthetase family. Homodimer.

The protein resides in the cytoplasm. It catalyses the reaction tRNA(Asn) + L-asparagine + ATP = L-asparaginyl-tRNA(Asn) + AMP + diphosphate + H(+). In Histophilus somni (strain 2336) (Haemophilus somnus), this protein is Asparagine--tRNA ligase.